A 118-amino-acid polypeptide reads, in one-letter code: Pterin-4-alpha-carbinolamine dehydratase (118 aa).

Belongs to the pterin-4-alpha-carbinolamine dehydratase family.

It catalyses the reaction (4aS,6R)-4a-hydroxy-L-erythro-5,6,7,8-tetrahydrobiopterin = (6R)-L-erythro-6,7-dihydrobiopterin + H2O. Its function is as follows. Involved in tetrahydrobiopterin biosynthesis. Seems to both prevent the formation of 7-pterins and accelerate the formation of quinonoid-BH2. May also have a positive regulatory role in the expression of phhA. The polypeptide is Pterin-4-alpha-carbinolamine dehydratase (phhB) (Pseudomonas syringae pv. tomato (strain ATCC BAA-871 / DC3000)).